The chain runs to 341 residues: Putative ubiquitin-like-specific protease 1B (341 aa).

Catalysis depends on residues His-231, Asp-248, and Cys-300.

The protein belongs to the peptidase C48 family.

Functionally, protease that catalyzes two essential functions in the SUMO pathway: processing of full-length SUMOs to their mature forms and deconjugation of SUMO from targeted proteins. In Arabidopsis thaliana (Mouse-ear cress), this protein is Putative ubiquitin-like-specific protease 1B (ULP1B).